We begin with the raw amino-acid sequence, 417 residues long: V-set and immunoglobulin domain-containing protein 8 (417 aa).

The signal sequence occupies residues 1 to 21; it reads MGVRGALHLLLVCLSPALLSA. Ig-like V-type domains follow at residues 22–140 and 145–256; these read VRIN…VIVT and PAVP…VKVS. Residues 22–262 lie on the Extracellular side of the membrane; that stretch reads VRINGDGQEV…VKVSDSQRVG (241 aa). Cystine bridges form between C44–C125 and C166–C238. A helical transmembrane segment spans residues 263-283; that stretch reads MIVGAVLGSLLMLACLALGIW. Residues 284–417 lie on the Cytoplasmic side of the membrane; the sequence is GLICCCCGGG…QRSCKDGLLV (134 aa).

Its subcellular location is the membrane. This Mus musculus (Mouse) protein is V-set and immunoglobulin domain-containing protein 8 (Vsig8).